Consider the following 100-residue polypeptide: Urease subunit gamma (100 aa).

The protein belongs to the urease gamma subunit family. As to quaternary structure, heterotrimer of UreA (gamma), UreB (beta) and UreC (alpha) subunits. Three heterotrimers associate to form the active enzyme.

The protein localises to the cytoplasm. The enzyme catalyses urea + 2 H2O + H(+) = hydrogencarbonate + 2 NH4(+). It participates in nitrogen metabolism; urea degradation; CO(2) and NH(3) from urea (urease route): step 1/1. In Streptomyces coelicolor (strain ATCC BAA-471 / A3(2) / M145), this protein is Urease subunit gamma.